Here is a 505-residue protein sequence, read N- to C-terminus: MYRKLAVISAFLAAARAQQVCTQQAETHPPLTWQKCTASGCTPQQGSVVLDANWRWTHDTKSTTNCYDGNTWSSTLCPDDATCAKNCCLDGANYSGTYGVTTSGDALTLQFVTASNVGSRLYLMANDSTYQEFTLSGNEFSFDVDVSQLPCGLNGALYFVSMDADGGQSKYPGNAAGAKYGTGYCDSQCPRDLKFINGQANVEGWEPSSNNANTGVGGHGSCCSEMDIWEANSISEALTPHPCETVGQTMCSGDSCGGTYSNDRYGGTCDPDGCDWNPYRLGNTSFYGPGSSFALDTTKKLTVVTQFATDGSISRYYVQNGVKFQQPNAQVGSYSGNTINTDYCAAEQTAFGGTSFTDKGGLAQINKAFQGGMVLVMSLWDDYAVNMLWLDSTYPTNATASTPGAKRGSCSTSSGVPAQVEAQSPNSKVIYSNIRFGPIGSTGGNTGSNPPGTSTTRAPPSSTGSSPTATQTHYGQCGGTGWTGPTRCASGYTCQVLNPFYSQCL.

Residues 1–17 (MYRKLAVISAFLAAARA) form the signal peptide. Gln-18 carries the post-translational modification Pyrrolidone carboxylic acid. Positions 18-449 (QQVCTQQAET…GSTGGNTGSN (432 aa)) are catalytic. Disulfide bonds link Cys-21–Cys-88, Cys-36–Cys-41, Cys-66–Cys-87, and Cys-77–Cys-83. Residues Asn-93 and Asn-126 are each glycosylated (N-linked (GlcNAc...) asparagine). 6 cysteine pairs are disulfide-bonded: Cys-151–Cys-410, Cys-185–Cys-223, Cys-189–Cys-222, Cys-243–Cys-269, Cys-251–Cys-256, and Cys-274–Cys-344. Glu-225 serves as the catalytic Nucleophile. The active-site Proton donor/acceptor is the Glu-230. Residues Asn-283 and Asn-397 are each glycosylated (N-linked (GlcNAc...) asparagine). Disordered regions lie at residues 399 to 423 (TASTPGAKRGSCSTSSGVPAQVEAQ) and 440 to 472 (GSTGGNTGSNPPGTSTTRAPPSSTGSSPTATQT). Over residues 409 to 423 (SCSTSSGVPAQVEAQ) the composition is skewed to polar residues. Residues 447 to 470 (GSNPPGTSTTRAPPSSTGSSPTAT) are compositionally biased toward low complexity. A linker region spans residues 450 to 468 (PPGTSTTRAPPSSTGSSPT). Residues 469–505 (ATQTHYGQCGGTGWTGPTRCASGYTCQVLNPFYSQCL) form the CBM1 domain.

The protein belongs to the glycosyl hydrolase 7 (cellulase C) family. O-glycosylated. O-glycosylation of the cellulase linker provides protection from proteolysis. Linker glycans also contribute to binding affinity of cellobiohydrolases to cellulose.

It localises to the secreted. It carries out the reaction Hydrolysis of (1-&gt;4)-beta-D-glucosidic linkages in cellulose and cellotetraose, releasing cellobiose from the non-reducing ends of the chains.. In terms of biological role, exocellobiohydrolases (CBH) that catalyzes the hydrolysis of 1,4-beta-D-glucosidic bonds in cellulose to release the disaccharide cellobiose. The degradation of cellulose involves an interplay between different cellulolytic enzymes. Hydrolysis starts with endoglucanases (EGs), which cut internal beta-1,4-glucosidic bonds in cellulose to reduce the polymerization degree of the substrate and create new chain ends for exocellobiohydrolases (CBHs). The CBHs release the disaccharide cellobiose from the non-reducing end of the cellulose polymer chain. Finally, beta-1,4-glucosidases hydrolyze the cellobiose and other short cello-oligosaccharides into glucose units. The protein is Exoglucanase 1 (cbh1) of Trichoderma harzianum (Hypocrea lixii).